Here is a 91-residue protein sequence, read N- to C-terminus: Small ribosomal subunit protein bS20 (91 aa).

Residues 1–18 show a composition bias toward basic and acidic residues; sequence MPLHKSAEKRLRQSDRKN. The interval 1-25 is disordered; that stretch reads MPLHKSAEKRLRQSDRKNARNRARK.

The protein belongs to the bacterial ribosomal protein bS20 family.

Binds directly to 16S ribosomal RNA. This Chlorobium phaeovibrioides (strain DSM 265 / 1930) (Prosthecochloris vibrioformis (strain DSM 265)) protein is Small ribosomal subunit protein bS20.